The chain runs to 76 residues: Small ribosomal subunit protein uS17 (76 aa).

This sequence belongs to the universal ribosomal protein uS17 family. In terms of assembly, part of the 30S ribosomal subunit.

Its function is as follows. One of the primary rRNA binding proteins, it binds specifically to the 5'-end of 16S ribosomal RNA. This is Small ribosomal subunit protein uS17 from Ruegeria sp. (strain TM1040) (Silicibacter sp.).